The chain runs to 254 residues: Pyridoxine 5'-phosphate synthase (254 aa).

Position 12 (Asn-12) interacts with 3-amino-2-oxopropyl phosphate. 14-15 (DH) is a binding site for 1-deoxy-D-xylulose 5-phosphate. 3-amino-2-oxopropyl phosphate is bound at residue Arg-23. His-48 serves as the catalytic Proton acceptor. Positions 50 and 55 each coordinate 1-deoxy-D-xylulose 5-phosphate. The active-site Proton acceptor is the Glu-75. Thr-105 is a binding site for 1-deoxy-D-xylulose 5-phosphate. The active-site Proton donor is His-199. 3-amino-2-oxopropyl phosphate contacts are provided by residues Gly-200 and 221 to 222 (GF).

It belongs to the PNP synthase family. Homooctamer; tetramer of dimers.

It localises to the cytoplasm. The enzyme catalyses 3-amino-2-oxopropyl phosphate + 1-deoxy-D-xylulose 5-phosphate = pyridoxine 5'-phosphate + phosphate + 2 H2O + H(+). It functions in the pathway cofactor biosynthesis; pyridoxine 5'-phosphate biosynthesis; pyridoxine 5'-phosphate from D-erythrose 4-phosphate: step 5/5. Its function is as follows. Catalyzes the complicated ring closure reaction between the two acyclic compounds 1-deoxy-D-xylulose-5-phosphate (DXP) and 3-amino-2-oxopropyl phosphate (1-amino-acetone-3-phosphate or AAP) to form pyridoxine 5'-phosphate (PNP) and inorganic phosphate. This Rhodopseudomonas palustris (strain TIE-1) protein is Pyridoxine 5'-phosphate synthase.